The sequence spans 185 residues: Ribosome-recycling factor (185 aa).

The protein belongs to the RRF family.

The protein localises to the cytoplasm. In terms of biological role, responsible for the release of ribosomes from messenger RNA at the termination of protein biosynthesis. May increase the efficiency of translation by recycling ribosomes from one round of translation to another. This is Ribosome-recycling factor from Streptococcus sanguinis (strain SK36).